The following is a 456-amino-acid chain: Protein FAM124B (456 aa).

Residues 262-313 (NGCLRGDTHPQDSSLNSVSTQRTLEPRSRRRSRSRRFKVHSLELPQPSGSWE) form a disordered region. A compositionally biased stretch (polar residues) spans 272–284 (QDSSLNSVSTQRT). Residues 289–300 (SRRRSRSRRFKV) show a composition bias toward basic residues.

This sequence belongs to the FAM124 family. As to quaternary structure, interacts with CHD7 and CHD8. As to expression, expressed strongly in lung, at slightly lower levels in heart, kidney, brain and testis, and weakly in liver (at protein level). In brain, highly expressed in cortex, hippocampus, dentate gyrus, caudate putamen and cerebellum (at protein level).

The protein localises to the nucleus. In Mus musculus (Mouse), this protein is Protein FAM124B (Fam124b).